A 204-amino-acid chain; its full sequence is Holliday junction branch migration complex subunit RuvA (204 aa).

Residues methionine 1–asparagine 64 form a domain I region. Positions threonine 65–proline 143 are domain II. The segment at alanine 144–valine 155 is flexible linker. A domain III region spans residues isoleucine 156–valine 204.

The protein belongs to the RuvA family. In terms of assembly, homotetramer. Forms an RuvA(8)-RuvB(12)-Holliday junction (HJ) complex. HJ DNA is sandwiched between 2 RuvA tetramers; dsDNA enters through RuvA and exits via RuvB. An RuvB hexamer assembles on each DNA strand where it exits the tetramer. Each RuvB hexamer is contacted by two RuvA subunits (via domain III) on 2 adjacent RuvB subunits; this complex drives branch migration. In the full resolvosome a probable DNA-RuvA(4)-RuvB(12)-RuvC(2) complex forms which resolves the HJ.

The protein localises to the cytoplasm. Functionally, the RuvA-RuvB-RuvC complex processes Holliday junction (HJ) DNA during genetic recombination and DNA repair, while the RuvA-RuvB complex plays an important role in the rescue of blocked DNA replication forks via replication fork reversal (RFR). RuvA specifically binds to HJ cruciform DNA, conferring on it an open structure. The RuvB hexamer acts as an ATP-dependent pump, pulling dsDNA into and through the RuvAB complex. HJ branch migration allows RuvC to scan DNA until it finds its consensus sequence, where it cleaves and resolves the cruciform DNA. This is Holliday junction branch migration complex subunit RuvA from Vibrio cholerae serotype O1 (strain ATCC 39541 / Classical Ogawa 395 / O395).